The sequence spans 435 residues: F-box/FBD/LRR-repeat protein At1g51370 (435 aa).

Residues 18–64 enclose the F-box domain; sequence EDRISQLPEPLISEILFHLSTKDSVRTSALSTKWRYLWQSVPGLDLD. LRR repeat units follow at residues 123–148, 170–195, 234–259, 262–287, and 314–340; these read VHCFHDNKIPLSIYTCTTLVHLRLRW, VSYPNETTLQKLISGSPVLEELILFS, AKMYSTKNFQIISSGFPAKLDIDFVN, GRYQKKKVIEDILIDISRVRDLVISS, and RFYISDLEMLPTLLESCPKLESLILEM. The 53-residue stretch at 354–406 folds into the FBD domain; that stretch reads EPNVMVSTVPWCLVSSLKFVELKRSIPRYEGEMELVRYVLTNSTVLKKLRLNV.

The protein is F-box/FBD/LRR-repeat protein At1g51370 of Arabidopsis thaliana (Mouse-ear cress).